Consider the following 216-residue polypeptide: Glycerol-3-phosphate acyltransferase (216 aa).

The next 6 helical transmembrane spans lie at 3 to 23 (FPIF…YWIA), 48 to 68 (IGWK…MLPV), 82 to 102 (FQLL…FLGF), 112 to 132 (FGVF…VFWV), 142 to 162 (LGSI…TILL), and 166 to 186 (EVSY…ILTH).

Belongs to the PlsY family. As to quaternary structure, probably interacts with PlsX.

The protein localises to the cell inner membrane. The enzyme catalyses an acyl phosphate + sn-glycerol 3-phosphate = a 1-acyl-sn-glycero-3-phosphate + phosphate. The protein operates within lipid metabolism; phospholipid metabolism. In terms of biological role, catalyzes the transfer of an acyl group from acyl-phosphate (acyl-PO(4)) to glycerol-3-phosphate (G3P) to form lysophosphatidic acid (LPA). This enzyme utilizes acyl-phosphate as fatty acyl donor, but not acyl-CoA or acyl-ACP. This is Glycerol-3-phosphate acyltransferase from Leptospira interrogans serogroup Icterohaemorrhagiae serovar Lai (strain 56601).